A 339-amino-acid polypeptide reads, in one-letter code: Adenylosuccinate synthetase (339 aa).

Residues 12 to 18 (GDEGKGS) and 42 to 44 (GHS) contribute to the GTP site. Asp-13 acts as the Proton acceptor in catalysis. Positions 13 and 42 each coordinate Mg(2+). Residues 13–16 (DEGK), 40–43 (NAGH), Thr-127, Arg-141, Gln-179, Thr-194, and Arg-256 contribute to the IMP site. His-43 serves as the catalytic Proton donor. 252 to 258 (TVTGRRR) is a substrate binding site. Residues Arg-258, 284-286 (MLD), and 324-326 (KTG) each bind GTP.

Belongs to the adenylosuccinate synthetase family. In terms of assembly, homodimer. Requires Mg(2+) as cofactor.

The protein resides in the cytoplasm. The enzyme catalyses IMP + L-aspartate + GTP = N(6)-(1,2-dicarboxyethyl)-AMP + GDP + phosphate + 2 H(+). Its pathway is purine metabolism; AMP biosynthesis via de novo pathway; AMP from IMP: step 1/2. Functionally, plays an important role in the de novo pathway of purine nucleotide biosynthesis. Catalyzes the first committed step in the biosynthesis of AMP from IMP. The protein is Adenylosuccinate synthetase of Thermococcus sibiricus (strain DSM 12597 / MM 739).